The sequence spans 279 residues: 3-methyl-2-oxobutanoate hydroxymethyltransferase (279 aa).

Mg(2+)-binding residues include Asp44 and Asp83. Residues 44 to 45 (DS), Asp83, and Lys113 each bind 3-methyl-2-oxobutanoate. Residue Glu115 participates in Mg(2+) binding. Residue Glu182 is the Proton acceptor of the active site.

It belongs to the PanB family. As to quaternary structure, homodecamer; pentamer of dimers. It depends on Mg(2+) as a cofactor.

It localises to the cytoplasm. It catalyses the reaction 3-methyl-2-oxobutanoate + (6R)-5,10-methylene-5,6,7,8-tetrahydrofolate + H2O = 2-dehydropantoate + (6S)-5,6,7,8-tetrahydrofolate. Its pathway is cofactor biosynthesis; (R)-pantothenate biosynthesis; (R)-pantoate from 3-methyl-2-oxobutanoate: step 1/2. Catalyzes the reversible reaction in which hydroxymethyl group from 5,10-methylenetetrahydrofolate is transferred onto alpha-ketoisovalerate to form ketopantoate. This Dehalococcoides mccartyi (strain ATCC BAA-2100 / JCM 16839 / KCTC 5957 / BAV1) protein is 3-methyl-2-oxobutanoate hydroxymethyltransferase.